A 608-amino-acid chain; its full sequence is Tectonic-3 (608 aa).

The signal sequence occupies residues 1–22; it reads MRTPQLALLQVFLLMFPDGVRP. Residues 23-58 form a disordered region; sequence QPSSSPSGAVPTSLDLQPGTVGGTLQSSSEATATRP. Residues 23–586 are Extracellular-facing; sequence QPSSSPSGAV…AFSRGVSSQK (564 aa). Over residues 45-54 the composition is skewed to polar residues; sequence GTLQSSSEAT. N-linked (GlcNAc...) asparagine glycans are attached at residues Asn-78, Asn-179, and Asn-347. A helical membrane pass occupies residues 587–607; sequence CSVSPVLILCLLLLGVLNLET. Thr-608 is a topological domain (cytoplasmic).

It belongs to the tectonic family. As to quaternary structure, part of the tectonic-like complex (also named B9 complex).

It is found in the membrane. In terms of biological role, part of the tectonic-like complex which is required for tissue-specific ciliogenesis and may regulate ciliary membrane composition. May be involved in apoptosis regulation. Necessary for signal transduction through the sonic hedgehog (Shh) signaling pathway. The sequence is that of Tectonic-3 (TCTN3) from Macaca fascicularis (Crab-eating macaque).